A 922-amino-acid chain; its full sequence is Protein translocase subunit SecA (922 aa).

ATP-binding positions include glutamine 87, 105-109 (GEGKT), and aspartate 519. The segment at 850-891 (HASRQMRSIQGNAQHNSMGSFSGSGHGMGPTALSARSRPENA) is disordered. The span at 854–865 (QMRSIQGNAQHN) shows a compositional bias: polar residues. Positions 906, 908, 917, and 918 each coordinate Zn(2+).

The protein belongs to the SecA family. In terms of assembly, monomer and homodimer. Part of the essential Sec protein translocation apparatus which comprises SecA, SecYEG and auxiliary proteins SecDF. Other proteins may also be involved. It depends on Zn(2+) as a cofactor.

Its subcellular location is the cell inner membrane. It localises to the cytoplasm. The catalysed reaction is ATP + H2O + cellular proteinSide 1 = ADP + phosphate + cellular proteinSide 2.. Its function is as follows. Part of the Sec protein translocase complex. Interacts with the SecYEG preprotein conducting channel. Has a central role in coupling the hydrolysis of ATP to the transfer of proteins into and across the cell membrane, serving as an ATP-driven molecular motor driving the stepwise translocation of polypeptide chains across the membrane. The polypeptide is Protein translocase subunit SecA (Treponema denticola (strain ATCC 35405 / DSM 14222 / CIP 103919 / JCM 8153 / KCTC 15104)).